The following is a 206-amino-acid chain: Small ribosomal subunit protein uS4 (206 aa).

The tract at residues 18 to 45 is disordered; the sequence is NIWGRPKSPVNRREYGPGQHGQRRKGKM. The S4 RNA-binding domain maps to 94-157; it reads RRLDAVVYRA…KQLASVLEAV (64 aa).

Belongs to the universal ribosomal protein uS4 family. Part of the 30S ribosomal subunit. Contacts protein S5. The interaction surface between S4 and S5 is involved in control of translational fidelity.

Its function is as follows. One of the primary rRNA binding proteins, it binds directly to 16S rRNA where it nucleates assembly of the body of the 30S subunit. Functionally, with S5 and S12 plays an important role in translational accuracy. This Ruegeria pomeroyi (strain ATCC 700808 / DSM 15171 / DSS-3) (Silicibacter pomeroyi) protein is Small ribosomal subunit protein uS4.